Consider the following 594-residue polypeptide: (-)-endo-fenchol synthase, chloroplastic (594 aa).

The N-terminal 50 residues, 1 to 50 (MSSLVMHVGIVNKPAITYLPTLSRRASNLHNVSSTRLQTSCSLQLDYKPV), are a transit peptide targeting the chloroplast. Residues Asp-348, Asp-352, Asp-492, and Glu-500 each contribute to the Mg(2+) site. Positions 348–352 (DDIYD) match the DDXXD motif motif.

Belongs to the terpene synthase family. Tpsa subfamily. Mg(2+) is required as a cofactor. Mn(2+) serves as cofactor. In terms of tissue distribution, expressed at low levels in leaves.

The protein resides in the plastid. It localises to the chloroplast. The catalysed reaction is (2E)-geranyl diphosphate = alpha-pinene + diphosphate. It catalyses the reaction (2E)-geranyl diphosphate + H2O = (1S,2S,4R)-endo-fenchol + diphosphate. It carries out the reaction (2E)-geranyl diphosphate = limonene + diphosphate. The protein operates within secondary metabolite biosynthesis; terpenoid biosynthesis. In terms of biological role, monoterpene synthase involved in the biosynthesis of volatile compounds widely used in aromatherapy and folk medicine, and present in culinary herbs. Mediates the conversion of (2E)-geranyl diphosphate (GPP) into alpha fenchol, limonene and alpha-pinene and, as minor compounds, into beta-myrcene, alpha-terpinolene and alpha-phellandrene. This Lavandula stoechas (Butterfly lavender) protein is (-)-endo-fenchol synthase, chloroplastic.